The sequence spans 284 residues: MIADSSVLKKHTAIKRSTRIISLTLVLLGVFSFLLLTWNDSLEFYNSADPSENKKNSEEESEKKFVYKLPNLLKTADSFLSNENELNFQKVKEEISNIQSEVEVDIPEPSSKATSKFSSRSFQTDNVVTATTTTTLNPRSSSLALQKNCDHKKFDPRTDFLDIIRTSPAVLFIKSSQADSIFLKNLLQREFEISPELATVDLEKHSHGYELEKYIKQNKLNIDTSAALESIQSPYLFLNGISVINRGMVRDIIEPHSKGLLLPLLKSEARGNLLVEKKDIPSNS.

A helical membrane pass occupies residues 20 to 38 (IISLTLVLLGVFSFLLLTW). Residues 157–272 (RTDFLDIIRT…PLLKSEARGN (116 aa)) enclose the Glutaredoxin domain.

It localises to the membrane. The polypeptide is Pheromone-regulated membrane protein 4 (PRM4) (Saccharomyces cerevisiae (strain ATCC 204508 / S288c) (Baker's yeast)).